The primary structure comprises 501 residues: Prostacyclin synthase (501 aa).

A helical membrane pass occupies residues 1–21 (MSWAALLGLLAVLLLLLLLLS). Residues R107, L113, N288, 359–360 (TR), and R383 contribute to the substrate site. Residue C442 participates in heme binding.

This sequence belongs to the cytochrome P450 family. The cofactor is heme.

It localises to the endoplasmic reticulum membrane. It catalyses the reaction prostaglandin H2 = prostaglandin I2. The enzyme catalyses a hydroperoxyeicosatetraenoate = an oxoeicosatetraenoate + H2O. The catalysed reaction is (15S)-hydroperoxy-(5Z,8Z,11Z,13E)-eicosatetraenoate = 15-oxo-(5Z,8Z,11Z,13E)-eicosatetraenoate + H2O. It carries out the reaction (15S)-hydroperoxy-(5Z,8Z,11Z,13E)-eicosatetraenoate + AH2 = (15S)-hydroxy-(5Z,8Z,11Z,13E)-eicosatetraenoate + A + H2O. Catalyzes the biosynthesis and metabolism of eicosanoids. Catalyzes the isomerization of prostaglandin H2 to prostacyclin (= prostaglandin I2), a potent mediator of vasodilation and inhibitor of platelet aggregation. Additionally, displays dehydratase activity, toward hydroperoxyeicosatetraenoates (HPETEs), especially toward (15S)-hydroperoxy-(5Z,8Z,11Z,13E)-eicosatetraenoate (15(S)-HPETE). This chain is Prostacyclin synthase (Ptgis), found in Rattus norvegicus (Rat).